Consider the following 253-residue polypeptide: MAGHSKWANIQHRKGRQDKLRSKLFSRLSKEISIAAKLGGPDVDANPRLRLAVSNAKGQSMPKDNIQRAIDKASGGDDESFEDIRYEGFGPAGIGVIVEVSTDNKNRAAAEVRTAFAKNGGNLGETGSVAFMFDNVGEIRYPLSKADEDTMMEAAIEAGAEDVASEPGDEDNEGEHVIYTAREDLMEVVGGLSATFEDPSSAKLIWRPQNLIEVTGDKVATLMKMMEMLEDSDDVQNVYANFDISDEDMAQLD.

The protein belongs to the TACO1 family.

The protein localises to the cytoplasm. This is Probable transcriptional regulatory protein Mmar10_2433 from Maricaulis maris (strain MCS10) (Caulobacter maris).